A 38-amino-acid chain; its full sequence is Photosystem II reaction center protein L (38 aa).

Residues 17–37 (SLFLGRLLIFVLGILFSSYIF) traverse the membrane as a helical segment.

This sequence belongs to the PsbL family. In terms of assembly, PSII is composed of 1 copy each of membrane proteins PsbA, PsbB, PsbC, PsbD, PsbE, PsbF, PsbH, PsbI, PsbJ, PsbK, PsbL, PsbM, PsbT, PsbX, PsbY, PsbZ, Psb30/Ycf12, peripheral proteins PsbO, CyanoQ (PsbQ), PsbU, PsbV and a large number of cofactors. It forms dimeric complexes.

It is found in the cellular thylakoid membrane. One of the components of the core complex of photosystem II (PSII). PSII is a light-driven water:plastoquinone oxidoreductase that uses light energy to abstract electrons from H(2)O, generating O(2) and a proton gradient subsequently used for ATP formation. It consists of a core antenna complex that captures photons, and an electron transfer chain that converts photonic excitation into a charge separation. This subunit is found at the monomer-monomer interface and is required for correct PSII assembly and/or dimerization. In Prochlorothrix hollandica, this protein is Photosystem II reaction center protein L.